A 130-amino-acid chain; its full sequence is Large ribosomal subunit protein bL12 (130 aa).

This sequence belongs to the bacterial ribosomal protein bL12 family. Homodimer. Part of the ribosomal stalk of the 50S ribosomal subunit. Forms a multimeric L10(L12)X complex, where L10 forms an elongated spine to which 2 to 4 L12 dimers bind in a sequential fashion. Binds GTP-bound translation factors.

Its function is as follows. Forms part of the ribosomal stalk which helps the ribosome interact with GTP-bound translation factors. Is thus essential for accurate translation. In Cutibacterium acnes (strain DSM 16379 / KPA171202) (Propionibacterium acnes), this protein is Large ribosomal subunit protein bL12.